The chain runs to 248 residues: Small ribosomal subunit protein uS2 (248 aa).

It belongs to the universal ribosomal protein uS2 family.

This Cupriavidus necator (strain ATCC 17699 / DSM 428 / KCTC 22496 / NCIMB 10442 / H16 / Stanier 337) (Ralstonia eutropha) protein is Small ribosomal subunit protein uS2.